A 444-amino-acid chain; its full sequence is Probable polygalacturonase At1g80170 (444 aa).

A signal peptide spans 1–28 (MSYSRGGTLVTLLLLLVVASSLALTANA). PbH1 repeat units lie at residues 208–234 (CRRVTISGLKVIAPATSPNTDGIHISV), 235–256 (SRGIVIDNTTVSTGDDCISIVK), 258–278 (STQISISNIICGPGHGISIGS), 288–309 (VRDITVDTAIISDTANGVRIKT), 317–338 (VSKIIFRNIKMNNVSNPIIIDQ), and 351–378 (TSAISIENISFVHVRGTSASKEAIKISC). Asp-249 functions as the Proton donor in the catalytic mechanism. Residue His-272 is part of the active site.

It belongs to the glycosyl hydrolase 28 family. Expressed in young, mature and dehiscing anthers. Found in stems, but not in roots or in abscission zone of floral organs.

It localises to the secreted. Its subcellular location is the cell wall. The catalysed reaction is (1,4-alpha-D-galacturonosyl)n+m + H2O = (1,4-alpha-D-galacturonosyl)n + (1,4-alpha-D-galacturonosyl)m.. The polypeptide is Probable polygalacturonase At1g80170 (Arabidopsis thaliana (Mouse-ear cress)).